The sequence spans 170 residues: Negative modulator of initiation of replication (170 aa).

The segment at 139-145 is interaction with DNA; that stretch reads NTNTGRK.

This sequence belongs to the SeqA family. As to quaternary structure, homodimer. Polymerizes to form helical filaments.

Its subcellular location is the cytoplasm. Negative regulator of replication initiation, which contributes to regulation of DNA replication and ensures that replication initiation occurs exactly once per chromosome per cell cycle. Binds to pairs of hemimethylated GATC sequences in the oriC region, thus preventing assembly of replication proteins and re-initiation at newly replicated origins. Repression is relieved when the region becomes fully methylated. This Tolumonas auensis (strain DSM 9187 / NBRC 110442 / TA 4) protein is Negative modulator of initiation of replication.